We begin with the raw amino-acid sequence, 360 residues long: Histidinol-phosphate aminotransferase (360 aa).

Lys211 carries the post-translational modification N6-(pyridoxal phosphate)lysine.

It belongs to the class-II pyridoxal-phosphate-dependent aminotransferase family. Histidinol-phosphate aminotransferase subfamily. As to quaternary structure, homodimer. Requires pyridoxal 5'-phosphate as cofactor.

It carries out the reaction L-histidinol phosphate + 2-oxoglutarate = 3-(imidazol-4-yl)-2-oxopropyl phosphate + L-glutamate. The protein operates within amino-acid biosynthesis; L-histidine biosynthesis; L-histidine from 5-phospho-alpha-D-ribose 1-diphosphate: step 7/9. The protein is Histidinol-phosphate aminotransferase of Sodalis glossinidius (strain morsitans).